An 80-amino-acid chain; its full sequence is Cell division activator CedA (80 aa).

The protein belongs to the CedA family.

Its function is as follows. Activates the cell division inhibited by chromosomal DNA over-replication. This Citrobacter koseri (strain ATCC BAA-895 / CDC 4225-83 / SGSC4696) protein is Cell division activator CedA.